Consider the following 477-residue polypeptide: Aspartyl/glutamyl-tRNA(Asn/Gln) amidotransferase subunit B (477 aa).

The protein belongs to the GatB/GatE family. GatB subfamily. In terms of assembly, heterotrimer of A, B and C subunits.

It catalyses the reaction L-glutamyl-tRNA(Gln) + L-glutamine + ATP + H2O = L-glutaminyl-tRNA(Gln) + L-glutamate + ADP + phosphate + H(+). The catalysed reaction is L-aspartyl-tRNA(Asn) + L-glutamine + ATP + H2O = L-asparaginyl-tRNA(Asn) + L-glutamate + ADP + phosphate + 2 H(+). Its function is as follows. Allows the formation of correctly charged Asn-tRNA(Asn) or Gln-tRNA(Gln) through the transamidation of misacylated Asp-tRNA(Asn) or Glu-tRNA(Gln) in organisms which lack either or both of asparaginyl-tRNA or glutaminyl-tRNA synthetases. The reaction takes place in the presence of glutamine and ATP through an activated phospho-Asp-tRNA(Asn) or phospho-Glu-tRNA(Gln). This is Aspartyl/glutamyl-tRNA(Asn/Gln) amidotransferase subunit B from Streptococcus gordonii (strain Challis / ATCC 35105 / BCRC 15272 / CH1 / DL1 / V288).